A 713-amino-acid polypeptide reads, in one-letter code: Phenylalanine--tRNA ligase beta subunit (713 aa).

One can recognise a tRNA-binding domain in the interval 39–153 (IRHVENIKYG…EANLNEDPIA (115 aa)). Residues 379 to 454 (LKPKEILFDH…RFYGYDNFPI (76 aa)) form the B5 domain. Mg(2+) contacts are provided by Asp432, Asp438, Glu441, and Glu442.

It belongs to the phenylalanyl-tRNA synthetase beta subunit family. Type 1 subfamily. As to quaternary structure, tetramer of two alpha and two beta subunits. It depends on Mg(2+) as a cofactor.

It localises to the cytoplasm. It catalyses the reaction tRNA(Phe) + L-phenylalanine + ATP = L-phenylalanyl-tRNA(Phe) + AMP + diphosphate + H(+). The polypeptide is Phenylalanine--tRNA ligase beta subunit (Mycoplasma mobile (strain ATCC 43663 / 163K / NCTC 11711) (Mesomycoplasma mobile)).